A 231-amino-acid chain; its full sequence is VIGGDECNINEHRFLALVYANGSLCGGTLINQEWVLTARHCDRGNMRIYLGMHNLKVLNKDALRRFPKEKYFCLNTRNDTIWDKDIMLIRLNRPVRNSAHIAPLSLPSNPPSVGSVCRIMGWGTITSPNATLPDVPHCANINILDYAVCQAAYKGLAATTLCAGILEGGKDTCKGDSGGPLICNGQFQGILSVGGNPCAQPRKPGIYTKVFDYTDWIQSIISGNTDATCPP.

Positions V1–S222 constitute a Peptidase S1 domain. Intrachain disulfides connect C7/C138, C25/C41, C73/C229, C117/C183, C149/C162, and C173/C198. N21 carries an N-linked (GlcNAc...) asparagine glycan. The active-site Charge relay system is the H40. N-linked (GlcNAc...) asparagine glycosylation is present at N78. Residue D85 is the Charge relay system of the active site. N-linked (GlcNAc...) asparagine glycosylation is present at N129. The active-site Charge relay system is the S177.

Belongs to the peptidase S1 family. Snake venom subfamily. Monomer. As to expression, expressed by the venom gland.

It localises to the secreted. Snake venom serine protease that selectively cleaves the heavy chain of protein C (PROC). This activation is thrombomodulin-independent. The protein is Protein C activator of Agkistrodon contortrix contortrix (Southern copperhead).